A 299-amino-acid chain; its full sequence is Nucleotide-binding protein Moth_0258 (299 aa).

14–21 (GLSGAGKT) serves as a coordination point for ATP. A GTP-binding site is contributed by 68 to 71 (DIRG).

The protein belongs to the RapZ-like family.

Displays ATPase and GTPase activities. This chain is Nucleotide-binding protein Moth_0258, found in Moorella thermoacetica (strain ATCC 39073 / JCM 9320).